The primary structure comprises 182 residues: Transmembrane and coiled-coil domain-containing protein 2 (182 aa).

The helical transmembrane segment at 51-71 threads the bilayer; sequence VQIILRISFLILLGIGIYALW. A coiled-coil region spans residues 124-151; the sequence is GLQEKILKKLKTVENKMKNLEGIIVAQK.

It is found in the membrane. The protein is Transmembrane and coiled-coil domain-containing protein 2 (TMCO2) of Homo sapiens (Human).